A 382-amino-acid chain; its full sequence is Histidinol-phosphate aminotransferase (382 aa).

A disordered region spans residues 1 to 24 (MTSAPRPRPTLDDLPLREDLRGKS). The span at 9 to 22 (PTLDDLPLREDLRG) shows a compositional bias: basic and acidic residues. The residue at position 233 (K233) is an N6-(pyridoxal phosphate)lysine.

It belongs to the class-II pyridoxal-phosphate-dependent aminotransferase family. Histidinol-phosphate aminotransferase subfamily. Homodimer. The cofactor is pyridoxal 5'-phosphate.

The enzyme catalyses L-histidinol phosphate + 2-oxoglutarate = 3-(imidazol-4-yl)-2-oxopropyl phosphate + L-glutamate. The protein operates within amino-acid biosynthesis; L-histidine biosynthesis; L-histidine from 5-phospho-alpha-D-ribose 1-diphosphate: step 7/9. This Mycobacterium ulcerans (strain Agy99) protein is Histidinol-phosphate aminotransferase.